The following is a 492-amino-acid chain: Bifunctional purine biosynthesis protein PurH (492 aa).

The region spanning 1–144 (MKKAILSVSN…KNYKHVTTIV (144 aa)) is the MGS-like domain.

It belongs to the PurH family.

It carries out the reaction (6R)-10-formyltetrahydrofolate + 5-amino-1-(5-phospho-beta-D-ribosyl)imidazole-4-carboxamide = 5-formamido-1-(5-phospho-D-ribosyl)imidazole-4-carboxamide + (6S)-5,6,7,8-tetrahydrofolate. The catalysed reaction is IMP + H2O = 5-formamido-1-(5-phospho-D-ribosyl)imidazole-4-carboxamide. It participates in purine metabolism; IMP biosynthesis via de novo pathway; 5-formamido-1-(5-phospho-D-ribosyl)imidazole-4-carboxamide from 5-amino-1-(5-phospho-D-ribosyl)imidazole-4-carboxamide (10-formyl THF route): step 1/1. Its pathway is purine metabolism; IMP biosynthesis via de novo pathway; IMP from 5-formamido-1-(5-phospho-D-ribosyl)imidazole-4-carboxamide: step 1/1. The chain is Bifunctional purine biosynthesis protein PurH from Staphylococcus aureus (strain bovine RF122 / ET3-1).